The chain runs to 264 residues: MRILLTNDDGIHARGIQALIGELGSIAELFVAAPDRERSGTGHSITVFDPIKVIKAKLAGIKAGWVIGGTPVDCVKLASSKLVGDNIDLVVSGINHGPNLGTDVLYSGTVSAAVEGVIMGSPSIAVSLNSFAADTDFSFAARFTRQVIQNLFKNGMEKKTLLNINIPYLCPQDIKGIRITRLGVRNYENLFEERHDPRGNTYFWMGGGVLEEPQEEDSDVNAVQHSYISITPIHFDLTDYHLVEQYRKSFSQFSHLLGEADDNF.

A divalent metal cation-binding residues include Asp8, Asp9, Ser39, and Asn95.

Belongs to the SurE nucleotidase family. The cofactor is a divalent metal cation.

It is found in the cytoplasm. It catalyses the reaction a ribonucleoside 5'-phosphate + H2O = a ribonucleoside + phosphate. Nucleotidase that shows phosphatase activity on nucleoside 5'-monophosphates. The polypeptide is 5'-nucleotidase SurE (Syntrophomonas wolfei subsp. wolfei (strain DSM 2245B / Goettingen)).